Here is a 322-residue protein sequence, read N- to C-terminus: Adenine deaminase (322 aa).

Zn(2+) is bound by residues H11, H13, and H189. E192 (proton donor) is an active-site residue. D270 contacts Zn(2+). D271 provides a ligand contact to substrate.

Belongs to the metallo-dependent hydrolases superfamily. Adenosine and AMP deaminases family. Adenine deaminase type 2 subfamily. Zn(2+) is required as a cofactor.

The catalysed reaction is adenine + H2O + H(+) = hypoxanthine + NH4(+). Catalyzes the hydrolytic deamination of adenine to hypoxanthine. Plays an important role in the purine salvage pathway and in nitrogen catabolism. This is Adenine deaminase from Rhizobium leguminosarum bv. trifolii (strain WSM2304).